Consider the following 659-residue polypeptide: MLTHKNNQGGRKKMQVSFVIRDAEEKRHRNGVNALQLDTINGRLYSAGRDAIIRVWNSMQNNSQEPYIQSMEHHNDWVNDIVLCCGGRNLISASCDTTVKVWNAHKGFCMSTLRTHRDYVQALAYAKDREQVASAGLDKAIFLWDINTLTALTASNNTVTTSSITGSKDSIYSLAMNPSGTVIVCGSTENTLRIWDPRTCNKIAKLKGHAENVKALVVSEDGQHVISGSSDGKIKQWSIGQQRCVQTISVHSEGVWALLMTDNFSHVISGSRDKKIIMTDLRNPTNSVLICEERAPVLSLCYNYDQTGVWATTWNSDIRCWKLNPSEKLSFEVACIKGGAAIKKYHVLNDKRFMLTKDSEMNVAIYDVLKVKKVEDLGKVDYEEEIKKRSQKVYVPNWFTVDLKTGMPTIVLGQDEVDCFAAWVSAEAGLPEHAESGTDPKVNYGSLLLQALLEYWKPPPPHHHLQGVGSDLDSNGCDGDIRGNEYFSVPKHTPIIFSEVGGRNVCRLLVKDAVGETESALLSETVPSWVTNVVIERTIPKFIKLPFYLLAHPSMLKQDRSKKERLIANEFIQCRKVCEHVLEKVLGADLPASTGNSNSSQNNSQSDANSEGSQVPAEERIELLCNDVICDPNMDLRTVRHFIWKQSSDLTFHYRTKSN.

WD repeat units lie at residues 27-66 (RHRNGVNALQLDTINGRLYSAGRDAIIRVWNSMQNNSQEP), 73-112 (HHNDWVNDIVLCCGGRNLISASCDTTVKVWNAHKGFCMST), 115-154 (THRDYVQALAYAKDREQVASAGLDKAIFLWDINTLTALTA), 166-205 (GSKDSIYSLAMNPSGTVIVCGSTENTLRIWDPRTCNKIAK), 208-247 (GHAENVKALVVSEDGQHVISGSSDGKIKQWSIGQQRCVQT), 250-289 (VHSEGVWALLMTDNFSHVISGSRDKKIIMTDLRNPTNSVL), 292-331 (EERAPVLSLCYNYDQTGVWATTWNSDIRCWKLNPSEKLSF), and 337-376 (KGGAAIKKYHVLNDKRFMLTKDSEMNVAIYDVLKVKKVED). The interval 592–613 (ASTGNSNSSQNNSQSDANSEGS) is disordered. The span at 596 to 610 (NSNSSQNNSQSDANS) shows a compositional bias: low complexity.

It belongs to the WD repeat WDR48 family. Catalytic component of the Usp12-46 deubiquitylase complex consisting of Usp12-46, Wdr20 and Uaf1; regulatory subunit that, together wtih Wdr20, stabilizes Usp12-46. The Usp12-46 deubiquitylase complex associates with arr/arrow; the interaction leads to deubiquitination and stabilization of arr/arrow.

Its function is as follows. Regulatory component of the Usp12-46 deubiquitylase complex. activates deubiquitination by increasing the catalytic turnover without increasing the affinity of deubiquitinating enzymes for the substrate. The complex deubiquitylates the wg/wingless-signaling receptor arr/arrow, which stabilizes the receptor and increases its concentration at the cell surface; this enhances the sensitivity of cells to wg/wingless-signal stimulation. This increases the amplitude and spatial range of the signaling response to the wg/wingless morphogen gradient, facilitating the precise concentration-dependent regulation of its target genes. Together with Wdr20 and Usp12-46 required for wg/wingless-mediated signaling in the wing imaginal disc and for wg/wingless-dependent regulation of intestinal stem cell proliferation. The protein is WD repeat-containing protein 48 homolog of Aedes aegypti (Yellowfever mosquito).